The primary structure comprises 854 residues: MDEAAAAEAVQLIDGEGEFAADSAERFMAAAGVAGCGLSYAVVSIMGPQSSGKSTLLNQLFGTNFREMDAFRGRSQTTKGIWIARCVGVEPCTVVMDLEGTDGRERGEDDTAFEKQSSLFALAISDIVLINMWCHDIGREQAANKPLLKTVFQVMMRLFSPRKTTLLFVIRDKTRTPLEHLEPVLREDIQKIWNSVAKPEAHKDTPISEFFNVQVTALPSFEEKEEQFREQVQQLRQRFSNSIAPGGLAGDRRGVVPASGFLFSSQQIWKVIRENKDLDLPAHKVMVATVRCDEIAHEKFSCLTSDAEWMELESDVQSGPVPGFGKKLGYIVDVHMQEYDKEAIYFDEAVRTAKRQLLKSRVLNLVQPAFQKMLAHLRTRALEKYKTELNLTLESGKGFAAAVRDTTESNLNEFDQGCADAVIEQADWDYSKILEKVRRDVEDHTLSIREGKLSELTNHAKEKLRKALVEPVESLFDAAGPSTWASIRNLFKRETEAILPEFQKNLAGFEMESATSEGMVSKLRDYARSIVENKAKEEAGKVLIHMKERFTTVFSHDKDSIPRVWTGKEDVRAIAKDARSAALKLLSVLAAIRWDEKPDKIEKILTSTLLDGSVTPKSKGASASSDPLASTTWEEVSPKYTLITPSQCKSLWKQFKAETEFAITQAVSTQQAHKRGNGRLPPPWAMVAIAVLGFNEIMTLLRNPIYLFLLFVGYLLVKALAVQLDINREFQNGVVPGIISVTAKLIPTLQNILNKVATEQQQQQGHHQDAAAEAPQQQQQPQPQPPPLLLSPRSPMSELRRPLHMPFSPVRKAVSPSPSSSSSTVTSPRNAGEDQKPRQMVQPDNESNNAYSIV.

Topologically, residues 1 to 680 (MDEAAAAEAV…QAHKRGNGRL (680 aa)) are cytoplasmic. The region spanning 37–252 (GLSYAVVSIM…IAPGGLAGDR (216 aa)) is the GB1/RHD3-type G domain. 47–54 (GPQSSGKS) lines the GTP pocket. The stretch at 217–242 (ALPSFEEKEEQFREQVQQLRQRFSNS) forms a coiled coil. A helical transmembrane segment spans residues 681–701 (PPPWAMVAIAVLGFNEIMTLL). The Lumenal segment spans residues 702–704 (RNP). Residues 705–725 (IYLFLLFVGYLLVKALAVQLD) traverse the membrane as a helical segment. Over 726-854 (INREFQNGVV…NESNNAYSIV (129 aa)) the chain is Cytoplasmic. 2 stretches are compositionally biased toward low complexity: residues 758 to 781 (TEQQ…QQQP) and 814 to 828 (VSPS…VTSP). The interval 758-854 (TEQQQQQGHH…NESNNAYSIV (97 aa)) is disordered. A compositionally biased stretch (polar residues) spans 842–854 (QPDNESNNAYSIV).

It belongs to the TRAFAC class dynamin-like GTPase superfamily. GB1/RHD3 GTPase family. RHD3 subfamily.

It localises to the endoplasmic reticulum membrane. Functionally, probable GTP-binding protein that may be involved in cell development. The polypeptide is Protein ROOT HAIR DEFECTIVE 3 homolog 1 (Oryza sativa subsp. japonica (Rice)).